A 1361-amino-acid chain; its full sequence is Cell migration-inducing and hyaluronan-binding protein (1361 aa).

The signal sequence occupies residues 1–30; it reads MGAAGRQDFLFKAMLTISWLTLTCFPGATS. Residues 44 to 166 enclose the G8 domain; it reads QPWNPGHDQD…KKLSWTFLNK (123 aa). Residues Asn-119, Asn-165, Asn-312, Asn-370, and Asn-420 are each glycosylated (N-linked (GlcNAc...) asparagine). In terms of domain architecture, GG-type lectin 1 spans 176-317; that stretch reads GGYFFERSWG…GEYFNVSLSS (142 aa). A necessary for its endoplasmic reticulum (ER) retention and interaction with HSPA5 region spans residues 295 to 591; the sequence is AAARVFKLFQ…IHHTFSRCVT (297 aa). PbH1 repeat units lie at residues 572–594, 595–617, 719–741, and 798–819; these read DPPT…TVHG, SNGL…FTED, IPLG…IIDN, and GGDV…TLAS. Residues Asn-889 and Asn-921 are each glycosylated (N-linked (GlcNAc...) asparagine). A GG-type lectin 2 domain is found at 1227–1361; the sequence is NDFAYIEVDG…PIPVVKKKKL (135 aa).

This sequence belongs to the CEMIP family. Interacts with EPHA2 and ITPR3. Interacts with HSPA5/BIP; the interaction induces calcium leakage from the endoplasmic reticulum and cell migration. Interacts with clathrin heavy chain/CLTC. N-glycosylated; glycosylation is not necessary for HA-binding. In terms of tissue distribution, expressed in dermal and in synovial fibroblasts. Strongly expressed in gastric cancers compared with the paired normal tissues. Strongly expressed in both ductal carcinoma and invasive breast cancer cells compared with benign epithelial cells (at protein level). Strongly expressed in brain, placenta, prostate, breast, lung and testis. Expressed in fibroblasts, epithelial cells and cancer cells. In ear, it is specifically expressed in inner ear. Expressed in cochlea and vestibule tissues. Strongly expressed in gastric cancers compared with the paired normal tissues. Strongly expressed in colon adenocarcinomas compared with normal colonic mucosas. Strongly expressed in breast cancer as compared to normal breast tissue.

The protein resides in the nucleus. It localises to the cytoplasm. Its subcellular location is the endoplasmic reticulum. It is found in the cell membrane. The protein localises to the membrane. The protein resides in the clathrin-coated pit. It localises to the secreted. It carries out the reaction Random hydrolysis of (1-&gt;4)-linkages between N-acetyl-beta-D-glucosamine and D-glucuronate residues in hyaluronate.. Its activity is regulated as follows. Activity is up-regulated by histamine. Its function is as follows. Mediates depolymerization of hyaluronic acid (HA) via the cell membrane-associated clathrin-coated pit endocytic pathway. Binds to hyaluronic acid. Hydrolyzes high molecular weight hyaluronic acid to produce an intermediate-sized product, a process that may occur through rapid vesicle endocytosis and recycling without intracytoplasmic accumulation or digestion in lysosomes. Involved in hyaluronan catabolism in the dermis of the skin and arthritic synovium. Positively regulates epithelial-mesenchymal transition (EMT), and hence tumor cell growth, invasion and cancer dissemination. In collaboration with HSPA5/BIP, promotes cancer cell migration in a calcium and PKC-dependent manner. May be involved in hearing. In Homo sapiens (Human), this protein is Cell migration-inducing and hyaluronan-binding protein.